The primary structure comprises 131 residues: Large-conductance mechanosensitive channel (131 aa).

The next 3 membrane-spanning stretches (helical) occupy residues 8-28 (FALK…GAFG), 30-50 (IVTS…VGGI), and 72-92 (GQFI…FMFI).

This sequence belongs to the MscL family. In terms of assembly, homopentamer.

The protein localises to the cell membrane. Its function is as follows. Channel that opens in response to stretch forces in the membrane lipid bilayer. May participate in the regulation of osmotic pressure changes within the cell. The chain is Large-conductance mechanosensitive channel from Alkaliphilus oremlandii (strain OhILAs) (Clostridium oremlandii (strain OhILAs)).